A 274-amino-acid chain; its full sequence is Hydroxyacylglutathione hydrolase, cytoplasmic isozyme (274 aa).

6 residues coordinate Zn(2+): His-59, His-61, Asp-63, His-64, His-121, and Asp-144. Residues Arg-153 and 188 to 190 (HEY) contribute to the substrate site. His-188 serves as a coordination point for Zn(2+). Residue Ser-257 is modified to Phosphoserine. 268-271 (RAMK) contacts substrate.

This sequence belongs to the metallo-beta-lactamase superfamily. Glyoxalase II family. Zn(2+) is required as a cofactor.

It localises to the cytoplasm. The catalysed reaction is an S-(2-hydroxyacyl)glutathione + H2O = a 2-hydroxy carboxylate + glutathione + H(+). It catalyses the reaction (R)-S-lactoylglutathione + H2O = (R)-lactate + glutathione + H(+). It functions in the pathway secondary metabolite metabolism; methylglyoxal degradation; (R)-lactate from methylglyoxal: step 2/2. Its activity is regulated as follows. Inhibited by various thiol compounds such as glutathione and coenzyme A. In terms of biological role, thiolesterase that catalyzes the hydrolysis of S-D-lactoylglutathione to form glutathione and D-lactic acid. Involved in the metabolism of methylglyoxal, a toxic compound for yeast proliferation, by converting methylglyoxal to lactate via S-D-lactoylglutathione by sequential enzyme reactions catalyzed by glyoxalase I and glyoxalase II. The sequence is that of Hydroxyacylglutathione hydrolase, cytoplasmic isozyme from Saccharomyces cerevisiae (strain ATCC 204508 / S288c) (Baker's yeast).